The primary structure comprises 205 residues: Pre-rRNA-processing protein TSR2 (205 aa).

The disordered stretch occupies residues 144 to 205 (SKRVVHIEGD…LVQPKGRRKH (62 aa)). The segment covering 152 to 177 (GDDDEDDEDVEDYDDEDEDEEMDEVV) has biased composition (acidic residues).

It belongs to the TSR2 family. Interacts with RPS26A.

The protein localises to the cytoplasm. The protein resides in the nucleus. Functionally, required for 20S pre-rRNA processing. This Saccharomyces cerevisiae (strain ATCC 204508 / S288c) (Baker's yeast) protein is Pre-rRNA-processing protein TSR2.